Reading from the N-terminus, the 305-residue chain is Dihydroorotate dehydrogenase B (NAD(+)), catalytic subunit (305 aa).

FMN contacts are provided by residues Ser-21 and 45–46 (KA). Residues Lys-45 and 69–73 (NAIGL) contribute to the substrate site. Residues Asn-99 and Asn-127 each coordinate FMN. Asn-127 contacts substrate. Cys-130 (nucleophile) is an active-site residue. The FMN site is built by Lys-165 and Ile-190. 191 to 192 (NT) contributes to the substrate binding site. FMN-binding positions include Gly-216, 242–243 (GG), and 264–265 (GT).

Belongs to the dihydroorotate dehydrogenase family. Type 1 subfamily. In terms of assembly, heterotetramer of 2 PyrK and 2 PyrD type B subunits. The cofactor is FMN.

It is found in the cytoplasm. The catalysed reaction is (S)-dihydroorotate + NAD(+) = orotate + NADH + H(+). Its pathway is pyrimidine metabolism; UMP biosynthesis via de novo pathway; orotate from (S)-dihydroorotate (NAD(+) route): step 1/1. In terms of biological role, catalyzes the conversion of dihydroorotate to orotate with NAD(+) as electron acceptor. This is Dihydroorotate dehydrogenase B (NAD(+)), catalytic subunit (pyrD) from Staphylococcus carnosus (strain TM300).